Consider the following 211-residue polypeptide: Protein-L-isoaspartate O-methyltransferase (211 aa).

Residue Ser-60 is part of the active site.

It belongs to the methyltransferase superfamily. L-isoaspartyl/D-aspartyl protein methyltransferase family.

The protein resides in the cytoplasm. It catalyses the reaction [protein]-L-isoaspartate + S-adenosyl-L-methionine = [protein]-L-isoaspartate alpha-methyl ester + S-adenosyl-L-homocysteine. Catalyzes the methyl esterification of L-isoaspartyl residues in peptides and proteins that result from spontaneous decomposition of normal L-aspartyl and L-asparaginyl residues. It plays a role in the repair and/or degradation of damaged proteins. The sequence is that of Protein-L-isoaspartate O-methyltransferase from Pseudomonas fluorescens (strain ATCC BAA-477 / NRRL B-23932 / Pf-5).